Reading from the N-terminus, the 109-residue chain is Nucleoid-associated protein A1S_1684 (109 aa).

This sequence belongs to the YbaB/EbfC family. As to quaternary structure, homodimer.

It localises to the cytoplasm. It is found in the nucleoid. Its function is as follows. Binds to DNA and alters its conformation. May be involved in regulation of gene expression, nucleoid organization and DNA protection. This is Nucleoid-associated protein A1S_1684 from Acinetobacter baumannii (strain ATCC 17978 / DSM 105126 / CIP 53.77 / LMG 1025 / NCDC KC755 / 5377).